The chain runs to 219 residues: Vesicle-associated membrane protein 721 (219 aa).

Residues Met-1–Leu-196 lie on the Cytoplasmic side of the membrane. Positions Phe-10–Leu-114 constitute a Longin domain. In terms of domain architecture, v-SNARE coiled-coil homology spans Lys-130–Gln-190. Residues Ile-197–Phe-217 traverse the membrane as a helical; Anchor for type IV membrane protein segment. The Vesicular segment spans residues Lys-218–Cys-219.

Belongs to the synaptobrevin family. Expressed in flowers, leaves, stems and roots.

It is found in the cell membrane. The protein localises to the early endosome membrane. Its function is as follows. Involved in the targeting and/or fusion of transport vesicles to their target membrane. In Arabidopsis thaliana (Mouse-ear cress), this protein is Vesicle-associated membrane protein 721.